The sequence spans 391 residues: L-tryptophan--pyruvate aminotransferase 1 (391 aa).

Residues tyrosine 58, 100 to 101 (ST), asparagine 168, 191 to 194 (DFAY), 214 to 217 (TFSK), and arginine 225 each bind pyridoxal 5'-phosphate. Lysine 217 is modified (N6-(pyridoxal phosphate)lysine).

The protein belongs to the alliinase family. Requires pyridoxal 5'-phosphate as cofactor. Expressed at the leaf margin and in the vasculature of emerging young leaves. Expressed in the quiescent center and in the vasculature of root tips. Detected in the shoot apical meristem, stems, sepals, stamen filaments, the shoot and root junction, the stigma and the base of the silique.

Its subcellular location is the cytoplasm. It catalyses the reaction L-tryptophan + 2-oxoglutarate = indole-3-pyruvate + L-glutamate. It carries out the reaction L-tryptophan + pyruvate = indole-3-pyruvate + L-alanine. The protein operates within plant hormone metabolism; auxin biosynthesis. Inhibited by L-kynurenine. In terms of biological role, L-tryptophan aminotransferase involved in auxin (IAA) biosynthesis. Can convert L-tryptophan and pyruvate to indole-3-pyruvic acid (IPA) and alanine. Catalyzes the first step in IPA branch of the auxin biosynthetic pathway. Required for auxin production to initiate multiple change in growth in response to environmental and developmental cues. It is also active with phenylalanine, tyrosine, leucine, alanine, methionine and glutamine. Both TAA1 and TAR2 are required for maintaining proper auxin levels in roots, while TAA1, TAR1 and TAR2 are required for proper embryo patterning. Involved in the maintenance of the root stem cell niches and required for shade avoidance. This Arabidopsis thaliana (Mouse-ear cress) protein is L-tryptophan--pyruvate aminotransferase 1 (TAA1).